A 302-amino-acid chain; its full sequence is Protease HtpX homolog (302 aa).

The helical transmembrane segment at 27–47 (LLMAIGGIIGGTAGMLIALII) threads the bilayer. Zn(2+) is bound at residue His141. The active site involves Glu142. Zn(2+) is bound at residue His145. 2 helical membrane passes run 151-171 (VLVA…ANMA) and 195-215 (IGAI…QLAI). Glu220 provides a ligand contact to Zn(2+).

It belongs to the peptidase M48B family. Zn(2+) serves as cofactor.

The protein localises to the cell inner membrane. The sequence is that of Protease HtpX homolog from Aquifex aeolicus (strain VF5).